Here is a 484-residue protein sequence, read N- to C-terminus: Cysteine--tRNA ligase (484 aa).

A Zn(2+)-binding site is contributed by Cys-27. Residues 29 to 39 (PTTYNYIHLGN) carry the 'HIGH' region motif. 3 residues coordinate Zn(2+): Cys-207, His-232, and Glu-236. Residues 264–268 (KMSKS) carry the 'KMSKS' region motif. Lys-267 provides a ligand contact to ATP.

Belongs to the class-I aminoacyl-tRNA synthetase family. In terms of assembly, monomer. Zn(2+) is required as a cofactor.

The protein resides in the cytoplasm. The enzyme catalyses tRNA(Cys) + L-cysteine + ATP = L-cysteinyl-tRNA(Cys) + AMP + diphosphate. The chain is Cysteine--tRNA ligase from Pelotomaculum thermopropionicum (strain DSM 13744 / JCM 10971 / SI).